The primary structure comprises 164 residues: FMN reductase (NADH) RutF (164 aa).

It belongs to the non-flavoprotein flavin reductase family. RutF subfamily.

The catalysed reaction is FMNH2 + NAD(+) = FMN + NADH + 2 H(+). Functionally, catalyzes the reduction of FMN to FMNH2 which is used to reduce pyrimidine by RutA via the Rut pathway. This Escherichia coli O150:H5 (strain SE15) protein is FMN reductase (NADH) RutF.